Consider the following 118-residue polypeptide: Ribosome-binding factor A (118 aa).

It belongs to the RbfA family. Monomer. Binds 30S ribosomal subunits, but not 50S ribosomal subunits or 70S ribosomes.

It is found in the cytoplasm. One of several proteins that assist in the late maturation steps of the functional core of the 30S ribosomal subunit. Associates with free 30S ribosomal subunits (but not with 30S subunits that are part of 70S ribosomes or polysomes). Required for efficient processing of 16S rRNA. May interact with the 5'-terminal helix region of 16S rRNA. The sequence is that of Ribosome-binding factor A from Shouchella clausii (strain KSM-K16) (Alkalihalobacillus clausii).